A 205-amino-acid chain; its full sequence is Recombination protein RecR (205 aa).

The C4-type zinc finger occupies 60–75; the sequence is CKVCHNISDTETCRIC. The Toprim domain occupies 83–178; it reads STICVVESIR…KLSVIARGIS (96 aa).

This sequence belongs to the RecR family.

May play a role in DNA repair. It seems to be involved in an RecBC-independent recombinational process of DNA repair. It may act with RecF and RecO. The sequence is that of Recombination protein RecR from Phocaeicola vulgatus (strain ATCC 8482 / DSM 1447 / JCM 5826 / CCUG 4940 / NBRC 14291 / NCTC 11154) (Bacteroides vulgatus).